The following is a 147-amino-acid chain: Cyanate hydratase (147 aa).

Catalysis depends on residues Arg88, Glu91, and Ser114.

This sequence belongs to the cyanase family.

It carries out the reaction cyanate + hydrogencarbonate + 3 H(+) = NH4(+) + 2 CO2. Functionally, catalyzes the reaction of cyanate with bicarbonate to produce ammonia and carbon dioxide. The polypeptide is Cyanate hydratase (Methylibium petroleiphilum (strain ATCC BAA-1232 / LMG 22953 / PM1)).